A 165-amino-acid chain; its full sequence is Phosphopantetheine adenylyltransferase (165 aa).

Ser10 is a binding site for substrate. ATP contacts are provided by residues 10 to 11 (SF) and His18. Lys42, Leu74, and Arg88 together coordinate substrate. Residues 89 to 91 (GLR), Glu99, and 124 to 130 (YSFISSS) each bind ATP.

Belongs to the bacterial CoaD family. Homohexamer. Requires Mg(2+) as cofactor.

The protein localises to the cytoplasm. The catalysed reaction is (R)-4'-phosphopantetheine + ATP + H(+) = 3'-dephospho-CoA + diphosphate. The protein operates within cofactor biosynthesis; coenzyme A biosynthesis; CoA from (R)-pantothenate: step 4/5. Reversibly transfers an adenylyl group from ATP to 4'-phosphopantetheine, yielding dephospho-CoA (dPCoA) and pyrophosphate. This chain is Phosphopantetheine adenylyltransferase, found in Macrococcus caseolyticus (strain JCSC5402) (Macrococcoides caseolyticum).